Reading from the N-terminus, the 161-residue chain is Allophycocyanin beta chain (161 aa).

Residue N71 is modified to N4-methylasparagine. Position 81 (C81) interacts with (2R,3E)-phycocyanobilin.

Belongs to the phycobiliprotein family. Heterodimer of an alpha and a beta chain. Contains one covalently linked phycocyanobilin chromophore.

It localises to the cellular thylakoid membrane. In terms of biological role, light-harvesting photosynthetic bile pigment-protein from the phycobiliprotein complex. Allophycocyanin has a maximum absorption at approximately 650 nanometers. This Anabaena variabilis protein is Allophycocyanin beta chain (apcB).